Here is a 194-residue protein sequence, read N- to C-terminus: Holliday junction branch migration complex subunit RuvA (194 aa).

The domain I stretch occupies residues 1–61 (MYDFLTGIIK…DNQISLYGFK (61 aa)). The tract at residues 62 to 139 (TVKERNLFQK…GDFSKNIAPM (78 aa)) is domain II. Positions 139-143 (MKNLL) are flexible linker. The segment at 144–194 (ENSAELDDALAALVALGFSSKEVNKINPKLASLGELTTDAYIQKGLKLLTK) is domain III.

Belongs to the RuvA family. As to quaternary structure, homotetramer. Forms an RuvA(8)-RuvB(12)-Holliday junction (HJ) complex. HJ DNA is sandwiched between 2 RuvA tetramers; dsDNA enters through RuvA and exits via RuvB. An RuvB hexamer assembles on each DNA strand where it exits the tetramer. Each RuvB hexamer is contacted by two RuvA subunits (via domain III) on 2 adjacent RuvB subunits; this complex drives branch migration. In the full resolvosome a probable DNA-RuvA(4)-RuvB(12)-RuvC(2) complex forms which resolves the HJ.

It localises to the cytoplasm. Functionally, the RuvA-RuvB-RuvC complex processes Holliday junction (HJ) DNA during genetic recombination and DNA repair, while the RuvA-RuvB complex plays an important role in the rescue of blocked DNA replication forks via replication fork reversal (RFR). RuvA specifically binds to HJ cruciform DNA, conferring on it an open structure. The RuvB hexamer acts as an ATP-dependent pump, pulling dsDNA into and through the RuvAB complex. HJ branch migration allows RuvC to scan DNA until it finds its consensus sequence, where it cleaves and resolves the cruciform DNA. The chain is Holliday junction branch migration complex subunit RuvA from Oenococcus oeni (strain ATCC BAA-331 / PSU-1).